The primary structure comprises 350 residues: Anthranilate phosphoribosyltransferase (350 aa).

5-phospho-alpha-D-ribose 1-diphosphate contacts are provided by residues Gly-94, Gly-97–Asp-98, Thr-102, Asn-104–Thr-107, Lys-122–Ser-130, and Ser-134. Gly-94 is a binding site for anthranilate. Ser-106 contributes to the Mg(2+) binding site. Asn-125 serves as a coordination point for anthranilate. An anthranilate-binding site is contributed by Arg-180. The Mg(2+) site is built by Asp-239 and Glu-240.

This sequence belongs to the anthranilate phosphoribosyltransferase family. As to quaternary structure, homodimer. It depends on Mg(2+) as a cofactor.

The enzyme catalyses N-(5-phospho-beta-D-ribosyl)anthranilate + diphosphate = 5-phospho-alpha-D-ribose 1-diphosphate + anthranilate. It functions in the pathway amino-acid biosynthesis; L-tryptophan biosynthesis; L-tryptophan from chorismate: step 2/5. In terms of biological role, catalyzes the transfer of the phosphoribosyl group of 5-phosphorylribose-1-pyrophosphate (PRPP) to anthranilate to yield N-(5'-phosphoribosyl)-anthranilate (PRA). The polypeptide is Anthranilate phosphoribosyltransferase (Geobacter sulfurreducens (strain ATCC 51573 / DSM 12127 / PCA)).